We begin with the raw amino-acid sequence, 908 residues long: Metabotropic glutamate receptor 8 (908 aa).

An N-terminal signal peptide occupies residues M1 to S33. Topologically, residues Q34 to W583 are extracellular. C64 and C106 are oxidised to a cystine. A glycan (N-linked (GlcNAc...) asparagine) is linked at N95. L-glutamate-binding positions include S156, A177–T179, and Y227. 7 cysteine pairs are disulfide-bonded: C246–C534, C369–C384, C424–C431, C516–C535, C520–C538, C541–C553, and C556–C569. N298 is a glycosylation site (N-linked (GlcNAc...) asparagine). D309 lines the L-glutamate pocket. K401 contributes to the L-glutamate binding site. N-linked (GlcNAc...) asparagine glycosylation is found at N452 and N480. An N-linked (GlcNAc...) asparagine glycan is attached at N565. A helical transmembrane segment spans residues A584–Y608. Residues N609 to E620 are Cytoplasmic-facing. A helical membrane pass occupies residues L621–A641. The Extracellular segment spans residues A642 to I647. Residues C648–T668 traverse the membrane as a helical segment. Residues K669 to Q695 lie on the Cytoplasmic side of the membrane. The chain crosses the membrane as a helical span at residues L696–V716. The Extracellular segment spans residues D717–D746. Residues L747–I768 form a helical membrane-spanning segment. The Cytoplasmic segment spans residues K769–K781. Residues P782–G803 traverse the membrane as a helical segment. Topologically, residues T804 to L818 are extracellular. Residues T819 to F843 traverse the membrane as a helical segment. The Cytoplasmic segment spans residues H844–I908. K882 is covalently cross-linked (Glycyl lysine isopeptide (Lys-Gly) (interchain with G-Cter in SUMO1)).

This sequence belongs to the G-protein coupled receptor 3 family. In terms of assembly, interacts with PICK1. In terms of tissue distribution, strongly expressed in olfactory bulb, accessory olfactory bulb, and mammillary body. Weaker expression in the retina, and in scattered cells in the cortex and hindbrain.

It is found in the cell membrane. In terms of biological role, G-protein coupled receptor for glutamate. Ligand binding causes a conformation change that triggers signaling via guanine nucleotide-binding proteins (G proteins) and modulates the activity of down-stream effectors. Signaling inhibits adenylate cyclase activity. This Mus musculus (Mouse) protein is Metabotropic glutamate receptor 8 (Grm8).